The primary structure comprises 191 residues: CASP-like protein 2U4 (191 aa).

Topologically, residues 1–25 (MGAYDGAEAPRAAPASTAANSRPSR) are cytoplasmic. A helical membrane pass occupies residues 26–46 (LLLLHSLLLRLVAVVLSILVI). Topologically, residues 47-68 (AVMVHAKQRVMIFKAEWDNSKA) are extracellular. A helical membrane pass occupies residues 69-89 (FVALVTISAICLGYSFLQFIL). Residues 90–114 (SAFHLCSKSWKSPTKCWAWMNFIAD) are Cytoplasmic-facing. A helical membrane pass occupies residues 115-135 (QILTYAMLGAAAAAAELAYIA). The Extracellular segment spans residues 136–157 (KNGSSRAQWQPICSTFNTFCTR). N137 is a glycosylation site (N-linked (GlcNAc...) asparagine). A helical membrane pass occupies residues 158 to 178 (AGASIILSFIAVLALANSSAI). Residues 179 to 191 (SAYHLFRRPSSSV) lie on the Cytoplasmic side of the membrane.

Belongs to the Casparian strip membrane proteins (CASP) family. In terms of assembly, homodimer and heterodimers.

Its subcellular location is the cell membrane. This is CASP-like protein 2U4 from Selaginella moellendorffii (Spikemoss).